A 241-amino-acid polypeptide reads, in one-letter code: Probable transcriptional regulatory protein lmo1535 (241 aa).

Over residues 1–14 (MSGHSKWNNIQGRK) the composition is skewed to polar residues. The segment at 1-22 (MSGHSKWNNIQGRKNAQDSKRS) is disordered.

This sequence belongs to the TACO1 family.

It is found in the cytoplasm. This chain is Probable transcriptional regulatory protein lmo1535, found in Listeria monocytogenes serovar 1/2a (strain ATCC BAA-679 / EGD-e).